The following is an 805-amino-acid chain: Chloride channel protein (805 aa).

Over 1–48 (MSHEKNEASGYPEAQSWKSQEAMLGARTEVSRWRAVKNCLYRHLVKVL) the chain is Cytoplasmic. The next 2 membrane-spanning stretches (helical) occupy residues 49–86 (GEDW…LFAL) and 93–116 (LQYL…CQIV). Residues 122–126 (GSGIP) carry the Selectivity filter part_1 motif. Residue Ser-123 coordinates chloride. Residues 125–132 (IPELKTII) constitute an intramembrane region (helical). Helical transmembrane passes span 141–159 (LTLR…ALSA) and 166–184 (EGPF…NQLL). A Selectivity filter part_2 motif is present at residues 164–168 (GKEGP). 2 intramembrane regions (helical) span residues 201 to 213 (ILTV…ISCC) and 217 to 225 (PLAGVLFSI). Transmembrane regions (helical) follow at residues 237–256 (YWRG…VLSV), 283–311 (MPAF…IVFM), and 320–339 (ILKK…LATL). N-linked (GlcNAc...) asparagine glycosylation is present at Asn-365. Helical transmembrane passes span 388 to 408 (LNIF…AALA) and 416 to 439 (GAFV…MALL). A Selectivity filter part_3 motif is present at residues 416–420 (GAFVP). Residue Phe-418 participates in chloride binding. The segment at residues 456–470 (GEYAVIGAAAMTGAV) is an intramembrane region (helical). An intramembrane region (note=Loop between two helices) is located at residues 471–472 (TH). Residues 473–484 (AVSTAVICFELT) constitute an intramembrane region (helical). The note=Loop between two helices intramembrane region spans 485–489 (GQISH). Residues 490-507 (VLPMMVAVILANMVAQGL) traverse the membrane as a helical segment. The Cytoplasmic portion of the chain corresponds to 508 to 805 (QPSLYDSIIQ…RTATSNSSGK (298 aa)). Tyr-512 contributes to the chloride binding site. In terms of domain architecture, CBS 1 spans 543–601 (MVRDVTSIASTSTYGDLLHVLRQTKLKFFPFVDTPDTNTLLGSIDRTEVEGLLQRRISA). Disordered regions lie at residues 606 to 625 (PAAA…GASF) and 653 to 684 (KVQT…QKGT). The region spanning 719–776 (IDQSPFQLVEGTSLQKTHTLFSLLGLDRAYVTSMGKLVGVVALAEIQAAIEGSYQKGF) is the CBS 2 domain.

The protein belongs to the chloride channel (TC 2.A.49) family. ClC-0 subfamily. In terms of assembly, homodimer. Each subunit contains a channel ('Double barreled channel').

It is found in the membrane. Functionally, voltage-gated chloride channel. This channel is thought to ensure the high conductance of the non-innervated membrane of the electrocyte necessary for efficient current generation caused by sodium influx through the acetylcholine receptor at the innervated membrane. The sequence is that of Chloride channel protein from Torpedo marmorata (Marbled electric ray).